A 206-amino-acid chain; its full sequence is Small ribosomal subunit protein uS4 (206 aa).

The S4 RNA-binding domain maps to 96–156; it reads GRLDNVVYRM…EKAKQQARIK (61 aa).

This sequence belongs to the universal ribosomal protein uS4 family. Part of the 30S ribosomal subunit. Contacts protein S5. The interaction surface between S4 and S5 is involved in control of translational fidelity.

In terms of biological role, one of the primary rRNA binding proteins, it binds directly to 16S rRNA where it nucleates assembly of the body of the 30S subunit. With S5 and S12 plays an important role in translational accuracy. The polypeptide is Small ribosomal subunit protein uS4 (Vibrio campbellii (strain ATCC BAA-1116)).